The primary structure comprises 430 residues: Gamma-glutamyl phosphate reductase (430 aa).

The protein belongs to the gamma-glutamyl phosphate reductase family.

The protein localises to the cytoplasm. The catalysed reaction is L-glutamate 5-semialdehyde + phosphate + NADP(+) = L-glutamyl 5-phosphate + NADPH + H(+). The protein operates within amino-acid biosynthesis; L-proline biosynthesis; L-glutamate 5-semialdehyde from L-glutamate: step 2/2. Functionally, catalyzes the NADPH-dependent reduction of L-glutamate 5-phosphate into L-glutamate 5-semialdehyde and phosphate. The product spontaneously undergoes cyclization to form 1-pyrroline-5-carboxylate. In Psychrobacter arcticus (strain DSM 17307 / VKM B-2377 / 273-4), this protein is Gamma-glutamyl phosphate reductase.